Reading from the N-terminus, the 317-residue chain is Beta-sarcoglycan (317 aa).

The disordered stretch occupies residues Met-1–Val-31. The Cytoplasmic segment spans residues Met-1 to Ala-64. Basic and acidic residues predominate over residues Ser-20–Val-31. A helical; Signal-anchor for type II membrane protein membrane pass occupies residues Ile-65–Ile-85. The Extracellular portion of the chain corresponds to Trp-86–Tyr-317. Asn-157, Asn-210, and Asn-257 each carry an N-linked (GlcNAc...) asparagine glycan. Cystine bridges form between Cys-287–Cys-313 and Cys-289–Cys-306.

Belongs to the sarcoglycan beta/delta/gamma/zeta family. In terms of assembly, cross-link to form 2 major subcomplexes: one consisting of SGCB, SGCD and SGCG and the other consisting of SGCB and SGCD. The association between SGCB and SGCG is particularly strong while SGCA is loosely associated with the other sarcoglycans. Post-translationally, disulfide bonds are present.

The protein resides in the cell membrane. Its subcellular location is the sarcolemma. The protein localises to the cytoplasm. It localises to the cytoskeleton. Its function is as follows. Component of the sarcoglycan complex, a subcomplex of the dystrophin-glycoprotein complex which forms a link between the F-actin cytoskeleton and the extracellular matrix. The protein is Beta-sarcoglycan (SGCB) of Bos taurus (Bovine).